The following is a 469-amino-acid chain: 3-isopropylmalate dehydratase large subunit (469 aa).

[4Fe-4S] cluster-binding residues include cysteine 350, cysteine 410, and cysteine 413.

This sequence belongs to the aconitase/IPM isomerase family. LeuC type 1 subfamily. In terms of assembly, heterodimer of LeuC and LeuD. Requires [4Fe-4S] cluster as cofactor.

The catalysed reaction is (2R,3S)-3-isopropylmalate = (2S)-2-isopropylmalate. It participates in amino-acid biosynthesis; L-leucine biosynthesis; L-leucine from 3-methyl-2-oxobutanoate: step 2/4. Catalyzes the isomerization between 2-isopropylmalate and 3-isopropylmalate, via the formation of 2-isopropylmaleate. The sequence is that of 3-isopropylmalate dehydratase large subunit from Rhizobium johnstonii (strain DSM 114642 / LMG 32736 / 3841) (Rhizobium leguminosarum bv. viciae).